Reading from the N-terminus, the 106-residue chain is Large ribosomal subunit protein bL21c (106 aa).

The protein belongs to the bacterial ribosomal protein bL21 family. As to quaternary structure, part of the 50S ribosomal subunit.

It localises to the plastid. The protein localises to the chloroplast. Functionally, this protein binds to 23S rRNA. The sequence is that of Large ribosomal subunit protein bL21c from Gracilaria tenuistipitata var. liui (Red alga).